A 35-amino-acid chain; its full sequence is Conotoxin Cal6.1f (35 aa).

The propeptide occupies 1–8 (GLIRPSKR). Disulfide bonds link cysteine 9–cysteine 25, cysteine 16–cysteine 29, and cysteine 24–cysteine 34.

It belongs to the conotoxin O1 superfamily. Expressed by the venom duct.

Its subcellular location is the secreted. Its function is as follows. Probable neurotoxin with unknown target. Possibly targets ion channels. The polypeptide is Conotoxin Cal6.1f (Californiconus californicus (California cone)).